Reading from the N-terminus, the 494-residue chain is Transmembrane and coiled-coil domain-containing protein 6 (494 aa).

The stretch at 15–39 (GVEELRRRRREREAALRKARREQQL) forms a coiled coil. 2 helical membrane-spanning segments follow: residues 338-358 (LVAA…ALLP) and 386-406 (PLLQ…TVLC).

The protein localises to the membrane. The polypeptide is Transmembrane and coiled-coil domain-containing protein 6 (Tmco6) (Mus musculus (Mouse)).